The following is a 479-amino-acid chain: Ribosomal lysine N-methyltransferase 2 (479 aa).

An SET domain is found at 22-325 (PNISICESPE…INEELFLNYG (304 aa)). Y324 provides a ligand contact to S-adenosyl-L-methionine.

The protein belongs to the class V-like SAM-binding methyltransferase superfamily. RKM2 family.

S-adenosyl-L-methionine-dependent protein-lysine N-methyltransferase that trimethylates 60S ribosomal protein L12 (RPL12A and RPL12B) at 'Lys-4' and 'Lys-11'. The sequence is that of Ribosomal lysine N-methyltransferase 2 from Saccharomyces cerevisiae (strain ATCC 204508 / S288c) (Baker's yeast).